The sequence spans 335 residues: Mitochondrial amidoxime reducing component 2 (335 aa).

A mitochondrion-targeting transit peptide spans 1 to 35; sequence MGASSSSALARLGLPAQARPRWLGVAVLGLAAVAL. Glycyl lysine isopeptide (Lys-Gly) (interchain with G-Cter in ubiquitin) cross-links involve residues Lys-59, Lys-138, and Lys-144. Residue Lys-156 is modified to N6-acetyllysine; alternate. Lys-156 participates in a covalent cross-link: Glycyl lysine isopeptide (Lys-Gly) (interchain with G-Cter in ubiquitin); alternate. Residues Lys-173, Lys-187, Lys-287, and Lys-294 each participate in a glycyl lysine isopeptide (Lys-Gly) (interchain with G-Cter in ubiquitin) cross-link. In terms of domain architecture, MOSC spans 188–334; that stretch reads GRTSRKLLPT…LRVGDPVYRM (147 aa).

As to quaternary structure, component of a complex composed of cytochrome b5, NADH-cytochrome b5 reductase (CYB5R3) and MTARC2. Mo-molybdopterin is required as a cofactor. Post-translationally, ubiquitinated by PRKN during mitophagy, leading to its degradation and enhancement of mitophagy. Deubiquitinated by USP30.

It is found in the mitochondrion outer membrane. It localises to the peroxisome. The catalysed reaction is N(omega)-hydroxy-L-arginine + 2 Fe(II)-[cytochrome b5] + 2 H(+) = L-arginine + 2 Fe(III)-[cytochrome b5] + H2O. In terms of biological role, catalyzes the reduction of N-oxygenated molecules, acting as a counterpart of cytochrome P450 and flavin-containing monooxygenases in metabolic cycles. As a component of prodrug-converting system, reduces a multitude of N-hydroxylated prodrugs particularly amidoximes, leading to increased drug bioavailability. May be involved in mitochondrial N(omega)-hydroxy-L-arginine (NOHA) reduction, regulating endogenous nitric oxide levels and biosynthesis. Postulated to cleave the N-OH bond of N-hydroxylated substrates in concert with electron transfer from NADH to cytochrome b5 reductase then to cytochrome b5, the ultimate electron donor that primes the active site for substrate reduction. The chain is Mitochondrial amidoxime reducing component 2 (MTARC2) from Macaca fascicularis (Crab-eating macaque).